A 657-amino-acid polypeptide reads, in one-letter code: MGILDTIRNPQDLSKLTEEQLSQLAAEVRSFLIGNVSQTGGHLGPNLGVVELTMAVHRIFDSPRDSIVFDTGHQSYVHKLLTGRQDFSTLRQEGGMSGYPDRGESEHDIVESSHASSSLSWADGISRARQLTGDGDRYVIAVVGDGALTGGMAWEAINNIAADKRRRVVIVVNDNGRSYAPTVGGFADYLASLRPTIDSFRAAPAYEGTLDWWKRKLQNGGPVGQFTYRSLHAMKKGIKDWWAPQGMFEDLGMKYIGPVDGHNLQAMEHALSTAKNYAGPVIVHAMTEKGHGYAPARAHEADQFHAVGIIDPETGVPTEAGGAQSWTSVFADEIAAIADERKDIVGITGAMLIPVGLHKFAARHPERVFDVGIAEQHALTSAAGMAFGGLHPVVAVYATFLNRAFDQLLMDVALHKAGVTIVLDRAGVTGPDGASHHGMWDMAMVQIVPGLHLAAPRDATRLREELREAVAIEDAPTVVRYSKGNVGAEVEALERLSDGVDVLARRPAGSSENDVLIVSVGAMSELALDVSNRLGAQGISSTVVDPRWLLPVRKSIIALAARHRLVICIEDGVRAGGVGSRIRQEMRAAGVDTALNEVGLPVEFLDHGTRAQVLERVGLTARQITHDVVAQVLGTKVPFARPLPGQEHPTTGSLPKL.

His73 provides a ligand contact to thiamine diphosphate. Positions 91 to 110 are disordered; it reads RQEGGMSGYPDRGESEHDIV. The span at 101 to 110 shows a compositional bias: basic and acidic residues; sequence DRGESEHDIV. 113-115 lines the thiamine diphosphate pocket; the sequence is SHA. Asp145 is a Mg(2+) binding site. Thiamine diphosphate contacts are provided by residues 146-147, Asn175, Tyr293, and Glu375; that span reads GA. Mg(2+) is bound at residue Asn175.

This sequence belongs to the transketolase family. DXPS subfamily. As to quaternary structure, homodimer. Requires Mg(2+) as cofactor. Thiamine diphosphate is required as a cofactor.

The enzyme catalyses D-glyceraldehyde 3-phosphate + pyruvate + H(+) = 1-deoxy-D-xylulose 5-phosphate + CO2. It functions in the pathway metabolic intermediate biosynthesis; 1-deoxy-D-xylulose 5-phosphate biosynthesis; 1-deoxy-D-xylulose 5-phosphate from D-glyceraldehyde 3-phosphate and pyruvate: step 1/1. Catalyzes the acyloin condensation reaction between C atoms 2 and 3 of pyruvate and glyceraldehyde 3-phosphate to yield 1-deoxy-D-xylulose-5-phosphate (DXP). The protein is 1-deoxy-D-xylulose-5-phosphate synthase of Arthrobacter sp. (strain FB24).